Here is a 346-residue protein sequence, read N- to C-terminus: MNWNEILFWLLKSGLFFFILITACAYYTLAERKVAGFIQDRKGPNRAGIWGLLQPLADGIKFLTKEEVFPTQVNKIMYLIAPAISMTCAIMAWSVVPLGGRIPLPQWLQDRTGLVFLDLQIANPDTGILFLFAISSLAVYGIIIAGWASNNKYSLLGAIRSTAQMISYELPLSMSVVSIVILTGSLKLTDISASQAGLWNIFKLPGFIAFCLFVVAMFAETNRLPFDLAEAESELVVGFHTEYGAFKFALFFIAEYMNMITMSCVVTLLFFGGYQVPFGILEGHVLQSLFGLFFFLGKVLFFTFLFVWVRWTLPRFRYDQLMSLGWKKLIPWAVLNILIASLYIQF.

Helical transmembrane passes span 6 to 26 (ILFW…ACAY), 76 to 96 (IMYL…WSVV), 128 to 148 (ILFL…AGWA), 166 to 186 (ISYE…TGSL), 198 to 218 (LWNI…VAMF), 260 to 280 (ITMS…PFGI), 289 to 309 (LFGL…FVWV), and 324 to 344 (LGWK…SLYI).

Belongs to the complex I subunit 1 family. In terms of assembly, NDH-1 is composed of 14 different subunits. Subunits NuoA, H, J, K, L, M, N constitute the membrane sector of the complex.

The protein resides in the cell inner membrane. The enzyme catalyses a quinone + NADH + 5 H(+)(in) = a quinol + NAD(+) + 4 H(+)(out). Functionally, NDH-1 shuttles electrons from NADH, via FMN and iron-sulfur (Fe-S) centers, to quinones in the respiratory chain. The immediate electron acceptor for the enzyme in this species is believed to be ubiquinone. Couples the redox reaction to proton translocation (for every two electrons transferred, four hydrogen ions are translocated across the cytoplasmic membrane), and thus conserves the redox energy in a proton gradient. This subunit may bind ubiquinone. This is NADH-quinone oxidoreductase subunit H from Leptospira borgpetersenii serovar Hardjo-bovis (strain JB197).